A 452-amino-acid chain; its full sequence is UDP-N-acetylmuramoylalanine--D-glutamate ligase (452 aa).

Residue 115–121 (GTNGKTT) participates in ATP binding.

This sequence belongs to the MurCDEF family.

The protein resides in the cytoplasm. It carries out the reaction UDP-N-acetyl-alpha-D-muramoyl-L-alanine + D-glutamate + ATP = UDP-N-acetyl-alpha-D-muramoyl-L-alanyl-D-glutamate + ADP + phosphate + H(+). Its pathway is cell wall biogenesis; peptidoglycan biosynthesis. Its function is as follows. Cell wall formation. Catalyzes the addition of glutamate to the nucleotide precursor UDP-N-acetylmuramoyl-L-alanine (UMA). The chain is UDP-N-acetylmuramoylalanine--D-glutamate ligase from Citrifermentans bemidjiense (strain ATCC BAA-1014 / DSM 16622 / JCM 12645 / Bem) (Geobacter bemidjiensis).